A 234-amino-acid chain; its full sequence is MSTESMIRDVELAEEELAKKAGGPQGSRRCLCLSLFSFLLVAGATTLFCLLHFGVIGPQREEQLPNAFQSINPLAQTLRSSSRTPSDKPVAHVVANPQAEGQLQWLSGRANALLANGVKLTDNQLVVPLDGLYLIYSQVLFKGQGCPSTHVLLTHTISRLAVSYPSKVNLLSAIKSPCHTESPEQAEAKPWYEPIYLGGVFQLEKGDQLSAEINQPNYLDFAESGQVYFGIIAL.

The Cytoplasmic portion of the chain corresponds to 1 to 35; the sequence is MSTESMIRDVELAEEELAKKAGGPQGSRRCLCLSL. Ser-2 bears the Phosphoserine; by CK1 mark. Residues Lys-19 and Lys-20 are each lipidated (N6-myristoyl lysine). The helical; Signal-anchor for type II membrane protein transmembrane segment at 36–56 threads the bilayer; it reads FSFLLVAGATTLFCLLHFGVI. Residues 57 to 234 lie on the Extracellular side of the membrane; that stretch reads GPQREEQLPN…GQVYFGIIAL (178 aa). Ser-81 is a glycosylation site (O-linked (GalNAc...) serine; in soluble form). A THD domain is found at 89 to 234; sequence PVAHVVANPQ…GQVYFGIIAL (146 aa). A disulfide bridge links Cys-146 with Cys-178.

The protein belongs to the tumor necrosis factor family. Homotrimer. Interacts with SPPL2B. The soluble form derives from the membrane form by proteolytic processing. The membrane-bound form is further proteolytically processed by SPPL2A or SPPL2B through regulated intramembrane proteolysis producing TNF intracellular domains (ICD1 and ICD2) released in the cytosol and TNF C-domain 1 and C-domain 2 secreted into the extracellular space. Post-translationally, the membrane form, but not the soluble form, is phosphorylated on serine residues. Dephosphorylation of the membrane form occurs by binding to soluble TNFRSF1A/TNFR1. In terms of processing, O-glycosylated; glycans contain galactose, N-acetylgalactosamine and N-acetylneuraminic acid. The soluble form is demyristoylated by SIRT6, promoting its secretion.

It is found in the cell membrane. The protein resides in the membrane. Its subcellular location is the secreted. Its function is as follows. Cytokine that binds to TNFRSF1A/TNFR1 and TNFRSF1B/TNFBR. It is mainly secreted by macrophages and can induce cell death of certain tumor cell lines. It is potent pyrogen causing fever by direct action or by stimulation of interleukin-1 secretion and is implicated in the induction of cachexia, Under certain conditions it can stimulate cell proliferation and induce cell differentiation. Induces insulin resistance in adipocytes via inhibition of insulin-induced IRS1 tyrosine phosphorylation and insulin-induced glucose uptake. Induces GKAP42 protein degradation in adipocytes which is partially responsible for TNF-induced insulin resistance. Plays a role in angiogenesis by inducing VEGF production synergistically with IL1B and IL6. Promotes osteoclastogenesis and therefore mediates bone resorption. Functionally, the TNF intracellular domain (ICD) form induces IL12 production in dendritic cells. This Equus caballus (Horse) protein is Tumor necrosis factor (TNF).